A 183-amino-acid polypeptide reads, in one-letter code: Neuronal synaptobrevin (183 aa).

The span at 1–17 (MADAAPAGDAPPNAGAP) shows a compositional bias: low complexity. Positions 1-32 (MADAAPAGDAPPNAGAPAGEGGDGEIVGGPHN) are disordered. Topologically, residues 1-106 (MADAAPAGDA…KFWLQNLKMM (106 aa)) are cytoplasmic. Over residues 18–27 (AGEGGDGEIV) the composition is skewed to gly residues. In terms of domain architecture, v-SNARE coiled-coil homology spans 41–101 (RLQQTQAQVD…GKLKRKFWLQ (61 aa)). A helical membrane pass occupies residues 107 to 127 (IIMGVIGLVVVGIIANKLGLI). Topologically, residues 128 to 183 (GGEQPPQYQYPPQYMQPPPPPPQQPAGGQSSLVDAAGAGDGAGAGGSAGAGDHGGV) are vesicular. Positions 135–183 (YQYPPQYMQPPPPPPQQPAGGQSSLVDAAGAGDGAGAGGSAGAGDHGGV) are disordered. The segment covering 141–151 (YMQPPPPPPQQ) has biased composition (pro residues). Residues 165–183 (AGDGAGAGGSAGAGDHGGV) are compositionally biased toward gly residues.

Belongs to the synaptobrevin family. In terms of assembly, part of the SNARE core complex containing Snap25 and syntaxin. In terms of tissue distribution, specifically expressed in neurons and synapses.

The protein resides in the cytoplasmic vesicle. Its subcellular location is the secretory vesicle. The protein localises to the synaptic vesicle membrane. It localises to the early endosome membrane. Its function is as follows. Involved in the targeting and/or fusion of transport vesicles to their target membrane. Major SNARE protein of synaptic vesicles which mediates fusion of synaptic vesicles to release neurotransmitters. Essential for fast vesicular exocytosis and activity-dependent neurotransmitter release as well as fast endocytosis that mediates rapid reuse of synaptic vesicles. Also involved in a neuron-specific sort-and-degrade mechanism that promotes endolysosomal degradation and is required for neuronal maintenance. This is Neuronal synaptobrevin from Drosophila melanogaster (Fruit fly).